Consider the following 357-residue polypeptide: NADH-quinone oxidoreductase subunit H (357 aa).

8 helical membrane passes run 18–38 (VAWMVVWSLVKIVVIAVPIIL), 92–112 (VLFVVAPVVTLMPALAAWAVV), 127–147 (LLYIMAITSIGVYGVIVAGWA), 165–185 (VSYELAIGFVLVSVLLVSGSL), 206–226 (FLSWNWLPLLPLFIIYVISAV), 268–288 (ILLSCMAAIMFLGGWMSPIDI), 294–314 (IPGWIWLGIKTFCVVSMFVWF), and 329–349 (LGWKIFIPLTGVWLVVLAIWM).

Belongs to the complex I subunit 1 family. As to quaternary structure, NDH-1 is composed of 14 different subunits. Subunits NuoA, H, J, K, L, M, N constitute the membrane sector of the complex.

It localises to the cell inner membrane. It catalyses the reaction a quinone + NADH + 5 H(+)(in) = a quinol + NAD(+) + 4 H(+)(out). NDH-1 shuttles electrons from NADH, via FMN and iron-sulfur (Fe-S) centers, to quinones in the respiratory chain. The immediate electron acceptor for the enzyme in this species is believed to be ubiquinone. Couples the redox reaction to proton translocation (for every two electrons transferred, four hydrogen ions are translocated across the cytoplasmic membrane), and thus conserves the redox energy in a proton gradient. This subunit may bind ubiquinone. This chain is NADH-quinone oxidoreductase subunit H, found in Bordetella bronchiseptica (strain ATCC BAA-588 / NCTC 13252 / RB50) (Alcaligenes bronchisepticus).